We begin with the raw amino-acid sequence, 560 residues long: Cytosolic purine 5'-nucleotidase (560 aa).

The Nucleophile role is filled by aspartate 52. Residues aspartate 52 and aspartate 54 each coordinate IMP. Positions 52 and 54 each coordinate Mg(2+). Aspartate 54 functions as the Proton donor in the catalytic mechanism. The ATP site is built by arginine 144 and asparagine 154. Arginine 202, aspartate 206, lysine 215, threonine 249, asparagine 250, serine 251, and lysine 292 together coordinate IMP. Residue aspartate 351 participates in Mg(2+) binding. Serine 418 is subject to Phosphoserine. ATP contacts are provided by glutamine 453 and arginine 456. 3 positions are modified to phosphoserine: serine 502, serine 511, and serine 527. Residues proline 541 to glutamate 560 form a disordered region. The tract at residues histidine 548 to glutamate 560 is required for tetramer assembly. Over residues glutamate 550–glutamate 560 the composition is skewed to acidic residues.

This sequence belongs to the 5'(3')-deoxyribonucleotidase family. As to quaternary structure, homotetramer. The cofactor is Mg(2+).

Its subcellular location is the cytoplasm. It is found in the cytosol. It carries out the reaction a ribonucleoside 5'-phosphate + H2O = a ribonucleoside + phosphate. The catalysed reaction is a 2'-deoxyribonucleoside + a ribonucleoside 5'-phosphate = a ribonucleoside + a 2'-deoxyribonucleoside 5'-phosphate. The enzyme catalyses IMP + H2O = inosine + phosphate. It catalyses the reaction GMP + H2O = guanosine + phosphate. It carries out the reaction dIMP + H2O = 2'-deoxyinosine + phosphate. The catalysed reaction is dGMP + H2O = 2'-deoxyguanosine + phosphate. The enzyme catalyses XMP + H2O = xanthosine + phosphate. It catalyses the reaction inosine + GMP = guanosine + IMP. It carries out the reaction dGMP + inosine = 2'-deoxyguanosine + IMP. The catalysed reaction is dIMP + inosine = 2'-deoxyinosine + IMP. The enzyme catalyses inosine + UMP = uridine + IMP. It catalyses the reaction inosine + CMP = cytidine + IMP. It carries out the reaction inosine + AMP = IMP + adenosine. With respect to regulation, allosterically activated by various compounds including ATP, 2,3-BPG/2,3-Bisphosphoglyceric acid and Ap4A/P1,P4-bis(5'-adenosyl) tetraphosphate. Binding of an allosteric activator is a prerequisiste to magnesium and substrate binding. Inhibited by inorganic phosphate. In terms of biological role, broad specificity cytosolic 5'-nucleotidase that catalyzes the dephosphorylation of 6-hydroxypurine nucleoside 5'-monophosphates. In addition, possesses a phosphotransferase activity by which it can transfer a phosphate from a donor nucleoside monophosphate to an acceptor nucleoside, preferably inosine, deoxyinosine and guanosine. Has the highest activities for IMP and GMP followed by dIMP, dGMP and XMP. Could also catalyze the transfer of phosphates from pyrimidine monophosphates but with lower efficiency. Through these activities regulates the purine nucleoside/nucleotide pools within the cell. In Bos taurus (Bovine), this protein is Cytosolic purine 5'-nucleotidase.